The sequence spans 335 residues: UPF0324 membrane protein gbs1193 (335 aa).

Helical transmembrane passes span 20-42 (SWLL…IGII), 57-79 (IAFT…LNLM), 84-106 (VGIS…AYVL), 116-138 (IATL…TAPV), 151-173 (SVIF…FIGL), 210-232 (GATI…LSIY), 253-275 (VLYF…SLRI), 285-304 (FFIV…SKLI), and 311-333 (ILLG…AILG).

Belongs to the UPF0324 family.

The protein localises to the cell membrane. This chain is UPF0324 membrane protein gbs1193, found in Streptococcus agalactiae serotype III (strain NEM316).